The chain runs to 106 residues: uncharacterized protein (106 aa).

A run of 3 helical transmembrane segments spans residues 5–27 (IFVI…GIII), 42–64 (AVAA…LAYM), and 76–98 (LPYI…TNFF).

The protein localises to the cell membrane. This is an uncharacterized protein from Archaeoglobus fulgidus (strain ATCC 49558 / DSM 4304 / JCM 9628 / NBRC 100126 / VC-16).